The sequence spans 634 residues: Ankyrin repeat protein OPG025 (634 aa).

6 ANK repeats span residues 36–69 (DGET…YKNI), 70–100 (NDFD…EINS), 103–134 (NGIN…PTCS), 175–211 (MGKT…EMRY), 307–337 (IQDL…TLYR), and 412–441 (HGCS…DINI).

It belongs to the orthopoxvirus OPG025 family. As to quaternary structure, interacts with components of host SCF complex CUL1 and SKP1 and components of the cullin deneddylation/COP9 signalosome complex subunits COPS7A and COPS7B.

In terms of biological role, plays a role in the inhibition of host immune repsonse by counteracting the action of interferons on early events in the viral replication cycle. The polypeptide is Ankyrin repeat protein OPG025 (OPG035) (Vaccinia virus (strain Western Reserve) (VACV)).